A 101-amino-acid polypeptide reads, in one-letter code: Small ribosomal subunit protein uS14 (101 aa).

The segment at 36 to 61 is disordered; sequence ASAEDRRAARQKLQSLPRNSSPVRQR. Polar residues predominate over residues 47–59; sequence KLQSLPRNSSPVR.

It belongs to the universal ribosomal protein uS14 family. In terms of assembly, part of the 30S ribosomal subunit. Contacts proteins S3 and S10.

Binds 16S rRNA, required for the assembly of 30S particles and may also be responsible for determining the conformation of the 16S rRNA at the A site. The polypeptide is Small ribosomal subunit protein uS14 (Methylobacillus flagellatus (strain ATCC 51484 / DSM 6875 / VKM B-1610 / KT)).